The following is a 395-amino-acid chain: Probable nitrate/nitrite transporter NarK2 (395 aa).

Helical transmembrane passes span 8–28, 45–65, 72–92, 98–118, 131–151, 157–177, 205–225, 244–266, 274–294, 301–321, 333–353, and 365–385; these read LVLA…IGPL, LLVA…GPLT, AMLI…GVAA, ALLV…AVGI, GFST…AFFT, WFGL…TAVV, LPVT…FVAF, AGAR…GWLS, VVLA…LQPP, ATFI…FAWV, VTGI…LVMG, and VGLL…ALHA.

This sequence belongs to the major facilitator superfamily. Nitrate/nitrite porter (TC 2.A.1.8) family.

The protein localises to the cell membrane. In terms of biological role, involved in excretion of nitrite produced by the dissimilatory reduction of nitrate. This chain is Probable nitrate/nitrite transporter NarK2 (narK2), found in Mycobacterium tuberculosis (strain CDC 1551 / Oshkosh).